A 515-amino-acid chain; its full sequence is MALSDLVLLRWLRDSRHSRKLILFIVFLALLLDNMLLTVVVPIIPSYLYSIKHEKNSTEIQTTRPELVVSTSESIFSYYNNSTVLITGNATGTLPGGQSHKATSTQHTVANTTVPSDCPSEDRDLLNENVQVGLLFASKATVQLLTNPFIGLLTNRIGYPIPMFAGFCIMFISTVMFAFSSSYAFLLIARSLQGIGSSCSSVAGMGMLASVYTDDEERGKPMGIALGGLAMGVLVGPPFGSVLYEFVGKTAPFLVLAALVLLDGAIQLFVLQPSRVQPESQKGTPLTTLLKDPYILIAAGSICFANMGIAMLEPALPIWMMETMCSRKWQLGVAFLPASISYLIGTNIFGILAHKMGRWLCALLGMVIVGISILCIPFAKNIYGLIAPNFGVGFAIGMVDSSMMPIMGYLVDLRHVSVYGSVYAIADVAFCMGYAIGPSAGGAIAKAIGFPWLMTIIGIIDIAFAPLCFFLRSPPAKEEKMAILMDHNCPIKRKMYTQNNVQSYPIGDDEESESD.

Residues 1-20 are Cytoplasmic-facing; it reads MALSDLVLLRWLRDSRHSRK. A helical membrane pass occupies residues 21–41; it reads LILFIVFLALLLDNMLLTVVV. The Lumenal, vesicle segment spans residues 42-130; it reads PIIPSYLYSI…EDRDLLNENV (89 aa). N-linked (GlcNAc...) asparagine glycosylation is found at asparagine 56, asparagine 80, asparagine 81, asparagine 89, and asparagine 111. The cysteines at positions 118 and 325 are disulfide-linked. A helical membrane pass occupies residues 131–151; the sequence is QVGLLFASKATVQLLTNPFIG. Topologically, residues 152-160 are cytoplasmic; the sequence is LLTNRIGYP. The helical transmembrane segment at 161 to 181 threads the bilayer; the sequence is IPMFAGFCIMFISTVMFAFSS. At 182–190 the chain is on the lumenal, vesicle side; it reads SYAFLLIAR. The chain crosses the membrane as a helical span at residues 191–211; that stretch reads SLQGIGSSCSSVAGMGMLASV. Residues 212-220 lie on the Cytoplasmic side of the membrane; that stretch reads YTDDEERGK. Residues 221–243 form a helical membrane-spanning segment; sequence PMGIALGGLAMGVLVGPPFGSVL. Positions 229 and 233 each coordinate serotonin. The Lumenal, vesicle segment spans residues 244–249; it reads YEFVGK. Residues 250–272 traverse the membrane as a helical segment; sequence TAPFLVLAALVLLDGAIQLFVLQ. The Cytoplasmic portion of the chain corresponds to 273 to 292; the sequence is PSRVQPESQKGTPLTTLLKD. A helical membrane pass occupies residues 293-312; it reads PYILIAAGSICFANMGIAML. Serotonin contacts are provided by asparagine 306, isoleucine 309, glutamate 313, phenylalanine 335, and tyrosine 342. Residues 313–329 are Lumenal, vesicle-facing; it reads EPALPIWMMETMCSRKW. A helical transmembrane segment spans residues 330 to 353; that stretch reads QLGVAFLPASISYLIGTNIFGILA. Topologically, residues 354 to 358 are cytoplasmic; it reads HKMGR. A helical membrane pass occupies residues 359–379; that stretch reads WLCALLGMVIVGISILCIPFA. Over 380–390 the chain is Lumenal, vesicle; that stretch reads KNIYGLIAPNF. The chain crosses the membrane as a helical span at residues 391–411; the sequence is GVGFAIGMVDSSMMPIMGYLV. Aspartate 400 contributes to the serotonin binding site. Residues 412–415 are Cytoplasmic-facing; that stretch reads DLRH. A helical membrane pass occupies residues 416-436; that stretch reads VSVYGSVYAIADVAFCMGYAI. Position 434 (tyrosine 434) interacts with serotonin. The Lumenal, vesicle portion of the chain corresponds to 437–441; the sequence is GPSAG. A helical membrane pass occupies residues 442-463; sequence GAIAKAIGFPWLMTIIGIIDIA. Over 464 to 515 the chain is Cytoplasmic; that stretch reads FAPLCFFLRSPPAKEEKMAILMDHNCPIKRKMYTQNNVQSYPIGDDEESESD. Serine 512 and serine 514 each carry phosphoserine; by CK2.

Belongs to the major facilitator superfamily. Vesicular transporter family. As to quaternary structure, interacts with SLC6A3. Expressed in the substantia nigra and the tuberomammillary nucleus of the posterior hypothalamus. Expressed in stomach, in particular in varicose nerve fibers and enterochromaffin-like cells in the corpus region (at protein level).

It localises to the cytoplasmic vesicle. It is found in the secretory vesicle. The protein resides in the synaptic vesicle membrane. Its subcellular location is the secretory vesicle membrane. The protein localises to the cell projection. It localises to the axon. It is found in the dendrite. The catalysed reaction is serotonin(in) + 2 H(+)(out) = serotonin(out) + 2 H(+)(in). It carries out the reaction dopamine(in) + 2 H(+)(out) = dopamine(out) + 2 H(+)(in). It catalyses the reaction histamine(in) + 2 H(+)(out) = histamine(out) + 2 H(+)(in). Strongly inhibited by reserpine and tetrabenazine. Also inhibited to a lesser extent by ketanserin and fenfluramine. Reserpine and ketanserin inhibit by blocking the substrate-binding pocket. Tetrabenazine traps SLC18A2/VMAT2 in an occluded conformation and its inhibition is specific to SLC18A2/VMAT2 but not SLC18A1/VMAT1. In terms of biological role, electrogenic antiporter that exchanges one cationic monoamine with two intravesicular protons across the membrane of secretory and synaptic vesicles. Uses the electrochemical proton gradient established by the V-type proton-pump ATPase to accumulate high concentrations of monoamines inside the vesicles prior to their release via exocytosis. Transports a variety of catecholamines such as dopamine, adrenaline and noradrenaline, histamine, and indolamines such as serotonin. Regulates the transvesicular monoaminergic gradient that determines the quantal size. Mediates somatodendritic dopamine release in hippocampal neurons, likely as part of a regulated secretory pathway that integrates retrograde synaptic signals. Acts as a primary transporter for striatal dopamine loading ensuring impulse-dependent release of dopamine at the synaptic cleft. Responsible for histamine and serotonin storage and subsequent corelease from mast cell granules. This chain is Synaptic vesicular amine transporter (Slc18a2), found in Rattus norvegicus (Rat).